The sequence spans 426 residues: Glutamate-1-semialdehyde 2,1-aminomutase (426 aa).

K265 bears the N6-(pyridoxal phosphate)lysine mark.

The protein belongs to the class-III pyridoxal-phosphate-dependent aminotransferase family. HemL subfamily. Homodimer. Requires pyridoxal 5'-phosphate as cofactor.

The protein localises to the cytoplasm. The enzyme catalyses (S)-4-amino-5-oxopentanoate = 5-aminolevulinate. It participates in porphyrin-containing compound metabolism; protoporphyrin-IX biosynthesis; 5-aminolevulinate from L-glutamyl-tRNA(Glu): step 2/2. The protein is Glutamate-1-semialdehyde 2,1-aminomutase of Escherichia coli O127:H6 (strain E2348/69 / EPEC).